The chain runs to 245 residues: NAD(P)H-quinone oxidoreductase subunit K (245 aa).

Cys58, Cys59, Cys123, and Cys154 together coordinate [4Fe-4S] cluster.

This sequence belongs to the complex I 20 kDa subunit family. As to quaternary structure, NDH-1 can be composed of about 15 different subunits; different subcomplexes with different compositions have been identified which probably have different functions. It depends on [4Fe-4S] cluster as a cofactor.

The protein localises to the cellular thylakoid membrane. The enzyme catalyses a plastoquinone + NADH + (n+1) H(+)(in) = a plastoquinol + NAD(+) + n H(+)(out). It catalyses the reaction a plastoquinone + NADPH + (n+1) H(+)(in) = a plastoquinol + NADP(+) + n H(+)(out). NDH-1 shuttles electrons from an unknown electron donor, via FMN and iron-sulfur (Fe-S) centers, to quinones in the respiratory and/or the photosynthetic chain. The immediate electron acceptor for the enzyme in this species is believed to be plastoquinone. Couples the redox reaction to proton translocation, and thus conserves the redox energy in a proton gradient. Cyanobacterial NDH-1 also plays a role in inorganic carbon-concentration. The polypeptide is NAD(P)H-quinone oxidoreductase subunit K (Trichormus variabilis (strain ATCC 29413 / PCC 7937) (Anabaena variabilis)).